Reading from the N-terminus, the 434-residue chain is Gamma-glutamyl phosphate reductase (434 aa).

It belongs to the gamma-glutamyl phosphate reductase family.

The protein resides in the cytoplasm. The catalysed reaction is L-glutamate 5-semialdehyde + phosphate + NADP(+) = L-glutamyl 5-phosphate + NADPH + H(+). The protein operates within amino-acid biosynthesis; L-proline biosynthesis; L-glutamate 5-semialdehyde from L-glutamate: step 2/2. Its function is as follows. Catalyzes the NADPH-dependent reduction of L-glutamate 5-phosphate into L-glutamate 5-semialdehyde and phosphate. The product spontaneously undergoes cyclization to form 1-pyrroline-5-carboxylate. This is Gamma-glutamyl phosphate reductase from Pelotomaculum thermopropionicum (strain DSM 13744 / JCM 10971 / SI).